Reading from the N-terminus, the 1399-residue chain is DNA-directed RNA polymerase subunit beta' (1399 aa).

4 residues coordinate Zn(2+): cysteine 70, cysteine 72, cysteine 85, and cysteine 88. Positions 460, 462, and 464 each coordinate Mg(2+). The Zn(2+) site is built by cysteine 814, cysteine 888, cysteine 895, and cysteine 898.

The protein belongs to the RNA polymerase beta' chain family. As to quaternary structure, the RNAP catalytic core consists of 2 alpha, 1 beta, 1 beta' and 1 omega subunit. When a sigma factor is associated with the core the holoenzyme is formed, which can initiate transcription. The cofactor is Mg(2+). Zn(2+) serves as cofactor.

The enzyme catalyses RNA(n) + a ribonucleoside 5'-triphosphate = RNA(n+1) + diphosphate. Functionally, DNA-dependent RNA polymerase catalyzes the transcription of DNA into RNA using the four ribonucleoside triphosphates as substrates. This chain is DNA-directed RNA polymerase subunit beta', found in Pseudomonas putida (strain W619).